The following is a 1296-amino-acid chain: Phosphoribosylformylglycinamidine synthase (1296 aa).

Residues 304 to 323 form a disordered region; sequence WPGAATGSGGEIRDEGATGR. ATP-binding positions include 306 to 317 and A677; that span reads GAATGSGGEIRD. Mg(2+) is bound by residues D678, E717, N721, and D885. S887 serves as a coordination point for ATP. A compositionally biased stretch (basic and acidic residues) spans 1000 to 1013; the sequence is PDCADQEHQAKQDE. Residues 1000 to 1019 are disordered; it reads PDCADQEHQAKQDESDPGLN. The Glutamine amidotransferase type-1 domain occupies 1043–1296; it reads VAVLREQGVN…MFRNARKQLG (254 aa). The Nucleophile role is filled by C1136. Active-site residues include H1261 and E1263.

It in the N-terminal section; belongs to the FGAMS family. In terms of assembly, monomer.

It localises to the cytoplasm. The enzyme catalyses N(2)-formyl-N(1)-(5-phospho-beta-D-ribosyl)glycinamide + L-glutamine + ATP + H2O = 2-formamido-N(1)-(5-O-phospho-beta-D-ribosyl)acetamidine + L-glutamate + ADP + phosphate + H(+). Its pathway is purine metabolism; IMP biosynthesis via de novo pathway; 5-amino-1-(5-phospho-D-ribosyl)imidazole from N(2)-formyl-N(1)-(5-phospho-D-ribosyl)glycinamide: step 1/2. Phosphoribosylformylglycinamidine synthase involved in the purines biosynthetic pathway. Catalyzes the ATP-dependent conversion of formylglycinamide ribonucleotide (FGAR) and glutamine to yield formylglycinamidine ribonucleotide (FGAM) and glutamate. In Yersinia pestis bv. Antiqua (strain Antiqua), this protein is Phosphoribosylformylglycinamidine synthase.